The chain runs to 166 residues: Cold-inducible RNA-binding protein (166 aa).

The RRM domain maps to 6-84; the sequence is GKLFVGGLNF…RQIRVDQAGK (79 aa). Residues 68–166 are disordered; it reads NGKSVDGRQI…DSYDSYTTQE (99 aa). Over residues 93–120 the composition is skewed to gly residues; that stretch reads YRGGSSGGRGFFRGGRGRGGGGDRGYGG. Low complexity predominate over residues 121–166; sequence SSRFENRSGGYQSSGSRDYYGRSHGSYGDRSGGSYRDSYDSYTTQE.

In terms of assembly, interacts with prmt1. Interacts with elavl1/elrA (via RRM3). Associates with ribosomes. Methylated on arginine residues within RGG motifs. Methylation by prmt1 promotes cytoplasmic accumulation.

It localises to the nucleus. The protein resides in the nucleoplasm. The protein localises to the cytoplasm. Cold-inducible mRNA binding protein. Acts cooperatively with elavl1/elrA to stabilize AU-rich element (ARE)-containing mRNAs by binding to themm and inhibiting their deadenylation. Essential for embryonic gastrulation and neural development, acting to maintain the expression of a set of adhesion molecules, and cell movement during embryogenesis. Required for pronephros development. This is Cold-inducible RNA-binding protein from Xenopus tropicalis (Western clawed frog).